Consider the following 236-residue polypeptide: Transmembrane protein 65 (236 aa).

A mitochondrion-targeting transit peptide spans 1–57 (MSRLLPLLRSRTARSLRPGPAAAAAPRPPSWCCCGRGLLALAAPGGPRALGTHPKKE). Residues 58–106 (PIEALNTAQGARDFIYSLHSSERSCLLKELHRFESIAIAQEKLEAQPPT) lie on the Cytoplasmic side of the membrane. The chain crosses the membrane as a helical span at residues 107–127 (PGQLRYVFIHNAIPFIGFGFL). Residues 128–138 (DNAIMIVAGTH) lie on the Extracellular side of the membrane. Residues 139–161 (IELSIGIILGISTMAAAALGNLV) traverse the membrane as a helical segment. Topologically, residues 162–205 (SDLAGLGLAGYVEALASRLGLSIPDLSPKQVDMWQTRVSSHLGK) are cytoplasmic. Residues 206–226 (AVGVTIGCILGMFPLIFFGGG) traverse the membrane as a helical segment. The Extracellular portion of the chain corresponds to 227–236 (EDDEKLEKKN).

In terms of assembly, monomer. Homodimer. Interacts with GJA1. Interacts weakly with DSP. Interacts with SCN1B.

It localises to the cell membrane. The protein localises to the mitochondrion inner membrane. In terms of biological role, essential for maintaining proper cardiac intercalated disk (ICD) structure and function as well as cardiac conduction velocity in the heart. Its association with SCN1B is required for stabilizing the perinexus in the ICD and for localization of GJA1 and SCN5A to the ICD. May regulate the function of the gap junction protein GJA1 and may contribute to the stability and proper localization of GJA1 to cardiac intercalated disk thereby regulating gap junction communication. Regulates mitochondrial respiration and mitochondrial DNA copy number maintenance. This is Transmembrane protein 65 (TMEM65) from Bos taurus (Bovine).